Reading from the N-terminus, the 433-residue chain is Trigger factor (433 aa).

The PPIase FKBP-type domain maps to 161-246 (NDRVIIDFVG…LNKVENMILP (86 aa)).

The protein belongs to the FKBP-type PPIase family. Tig subfamily.

It localises to the cytoplasm. The catalysed reaction is [protein]-peptidylproline (omega=180) = [protein]-peptidylproline (omega=0). Its function is as follows. Involved in protein export. Acts as a chaperone by maintaining the newly synthesized protein in an open conformation. Functions as a peptidyl-prolyl cis-trans isomerase. The chain is Trigger factor from Haemophilus ducreyi (strain 35000HP / ATCC 700724).